The sequence spans 297 residues: Vacuolar protein sorting-associated protein 26 (297 aa).

The protein belongs to the VPS26 family. In terms of assembly, component of the retromer complex, composed of VPS26, VPS29 and VPS35. As part of the retromer complex, interacts with the sorting receptor SORTLR/sortilin. Interacts with GTPase RAB7.

Plays a role in vesicular protein sorting. Component of the membrane-associated retromer complex which is essential in endosome-to-Golgi retrograde transport. The sequence is that of Vacuolar protein sorting-associated protein 26 from Plasmodium falciparum (isolate 3D7).